The following is a 44-amino-acid chain: Cytochrome b559 subunit beta (44 aa).

A helical membrane pass occupies residues 19–35 (WLAIHGIAIPTVFFLGA). A heme-binding site is contributed by His-23.

It belongs to the PsbE/PsbF family. In terms of assembly, heterodimer of an alpha subunit and a beta subunit. PSII is composed of 1 copy each of membrane proteins PsbA, PsbB, PsbC, PsbD, PsbE, PsbF, PsbH, PsbI, PsbJ, PsbK, PsbL, PsbM, PsbT, PsbX, PsbY, PsbZ, Psb30/Ycf12, at least 3 peripheral proteins of the oxygen-evolving complex and a large number of cofactors. It forms dimeric complexes. Heme b serves as cofactor.

The protein localises to the plastid. The protein resides in the chloroplast thylakoid membrane. This b-type cytochrome is tightly associated with the reaction center of photosystem II (PSII). PSII is a light-driven water:plastoquinone oxidoreductase that uses light energy to abstract electrons from H(2)O, generating O(2) and a proton gradient subsequently used for ATP formation. It consists of a core antenna complex that captures photons, and an electron transfer chain that converts photonic excitation into a charge separation. The protein is Cytochrome b559 subunit beta of Gracilaria tenuistipitata var. liui (Red alga).